A 91-amino-acid polypeptide reads, in one-letter code: Sec-independent protein translocase protein TatAt (91 aa).

The chain crosses the membrane as a helical span at residues 9–29; it reads FPGLPGGPELLVVLLIVVLLF. A disordered region spans residues 48-91; the sequence is FQRGREEIEDELQDMTGDDDEDDATSESSADSVSTDSVSTESSN. Acidic residues predominate over residues 54–72; the sequence is EIEDELQDMTGDDDEDDAT. The segment covering 73–91 has biased composition (low complexity); the sequence is SESSADSVSTDSVSTESSN.

The protein belongs to the TatA/E family. Forms a complex with TatC. Cytoplasmic and membrane-bound TatA form high-molecular-weight complexes.

The protein localises to the cell membrane. It is found in the cytoplasm. Its function is as follows. Part of the twin-arginine translocation (Tat) system that transports large folded proteins containing a characteristic twin-arginine motif in their signal peptide across membranes. TatA could form the protein-conducting channel of the Tat system. This is Sec-independent protein translocase protein TatAt from Haloferax volcanii (strain ATCC 29605 / DSM 3757 / JCM 8879 / NBRC 14742 / NCIMB 2012 / VKM B-1768 / DS2) (Halobacterium volcanii).